The following is a 76-amino-acid chain: MNKALFLCLVVLCAAVVFAAEDLQKAKHAPFKRATACFCPGKADRGDLWILRGDCPDGYGYTTYCYKGPNICCYPH.

Residues 1–19 form the signal peptide; sequence MNKALFLCLVVLCAAVVFA. The propeptide occupies 20-31; sequence AEDLQKAKHAPF. Intrachain disulfides connect C37–C72, C39–C65, and C55–C73.

The protein belongs to the sea anemone type 3 (BDS) potassium channel toxin family. In terms of tissue distribution, weakly expressed in the ectodermal tissue from the distal and proximal tentacles, body wall, and oral disk.

The protein localises to the secreted. It localises to the nematocyst. Functionally, blocks Kv3 voltage-gated potassium channels. Reduces blood pressure. This is Kappa-actitoxin-Avd4m from Anemonia viridis (Snakelocks anemone).